Here is a 320-residue protein sequence, read N- to C-terminus: Serpentine receptor class delta-28 (320 aa).

7 consecutive transmembrane segments (helical) span residues 5 to 25, 38 to 58, 83 to 103, 122 to 142, 176 to 196, 230 to 250, and 258 to 278; these read LLHT…MYLA, AIIT…FFVM, ACYI…IWMI, SLVF…ATWI, LTLI…YAWI, FLPS…TQLI, and LVSV…ILFV.

This sequence belongs to the nematode receptor-like protein srd family.

The protein localises to the membrane. This chain is Serpentine receptor class delta-28 (srd-28), found in Caenorhabditis elegans.